The sequence spans 305 residues: Uracil-DNA glycosylase (305 aa).

Residue D148 is the Proton acceptor of the active site.

The protein belongs to the uracil-DNA glycosylase (UDG) superfamily. UNG family.

Its subcellular location is the host nucleus. The enzyme catalyses Hydrolyzes single-stranded DNA or mismatched double-stranded DNA and polynucleotides, releasing free uracil.. In terms of biological role, excises uracil residues from the DNA which can arise as a result of misincorporation of dUMP residues by DNA polymerase or deamination of cytosines. Therefore may reduce deleterious uracil incorporation into the viral genome, particularly in terminally differentiated cells which lack DNA repair enzymes. This chain is Uracil-DNA glycosylase, found in Varicella-zoster virus (strain Dumas) (HHV-3).